The chain runs to 755 residues: MTTTPKEREPKVKVSVDVDPVPTSFEKWAKPGHFDRSLSRGPKTTTWIWNLHALAHDFDSHTSDLEDVSRKIFSAHFGHLAVVFVWLSGMYYHGAQFSNYSAWLADPINIKPSAQVVWPIFGQEILNGDVGGGFEGIRITSGLFHLWRAAGITNEFQLLCTAIGGLVMAGLCLFAGWFHYHKRAPKLEWFQNVESMLNHHLAGLLGLGSLAWAGHQIHVAIPINKMLDAGVPADQVPLPHEFILKPALMKEMFPSVDWGIFSGVVPFFTLDWGKYAEFLTFKGGLDPQNGALWLTDQAHHHLAIAVLFIVAGHMYRTNWGIGHSIKEILEAHKGPFTGEGHKGLYEVLTTSWHAQLAINLAMVGSLSIIVAQHMYAMNPYPYMGIDYATQISLFTHHMWIGGFFVVGGAAHGAIYMVRDYDPAVNRNNVLDRVLRHRDAIISHLNWVCLFLGFHAFGFYVHNDTMQALGRPQDMFSDTGIQLQPIFAQWIQSLHTSAIASTAPYVGASVSPIFGGDVVAVGGKVSMMPMVLGTADFMVHHIHAMTIHITVLILLKGVLFARSSRLIPDKGKLGFRFPCDGPGRGGTCQVSGWDHVFLGLFWMYNCISIVIFHFSWKMQSDIWGTVNADGTIEHITGGNFAASAININGWLRDFLWAQSVQVINSYGSALSAYGLLFLGAHFVWAFSLMFLFSGRGYWQELIESIVWAHNKLKVAPAIQPRALSIIQGRAVGVAHYLLGGIVTTWAFFLARFGALG.

Helical transmembrane passes span 72 to 95, 158 to 181, 197 to 221, 297 to 315, 352 to 375, 391 to 417, 439 to 461, and 536 to 554; these read IFSAHFGHLAVVFVWLSGMYYHGA, LLCTAIGGLVMAGLCLFAGWFHYH, LNHHLAGLLGLGSLAWAGHQIHVAI, QAHHHLAIAVLFIVAGHMY, WHAQLAINLAMVGSLSIIVAQHMY, ISLFTHHMWIGGFFVVGGAAHGAIYMV, AIISHLNWVCLFLGFHAFGFYVH, and FMVHHIHAMTIHITVLILL. [4Fe-4S] cluster contacts are provided by cysteine 578 and cysteine 587. Transmembrane regions (helical) follow at residues 594–615 and 669–691; these read HVFLGLFWMYNCISIVIFHFSW and LSAYGLLFLGAHFVWAFSLMFLF. Histidine 680 is a binding site for chlorophyll a'. Chlorophyll a-binding residues include methionine 688 and tyrosine 696. Residue tryptophan 697 participates in phylloquinone binding. Residues 729 to 749 form a helical membrane-spanning segment; that stretch reads AVGVAHYLLGGIVTTWAFFLA.

This sequence belongs to the PsaA/PsaB family. The PsaA/B heterodimer binds the P700 chlorophyll special pair and subsequent electron acceptors. PSI consists of a core antenna complex that captures photons, and an electron transfer chain that converts photonic excitation into a charge separation. The cyanobacterial PSI reaction center is composed of one copy each of PsaA,B,C,D,E,F,I,J,K,L,M and X, and forms trimeric complexes. The cofactor is PSI electron transfer chain: 5 chlorophyll a, 1 chlorophyll a', 2 phylloquinones and 3 4Fe-4S clusters. PSI core antenna: 90 chlorophyll a, 22 carotenoids, 3 phospholipids and 1 galactolipid. P700 is a chlorophyll a/chlorophyll a' dimer, A0 is one or more chlorophyll a, A1 is one or both phylloquinones and FX is a shared 4Fe-4S iron-sulfur center..

It is found in the cellular thylakoid membrane. It carries out the reaction reduced [plastocyanin] + hnu + oxidized [2Fe-2S]-[ferredoxin] = oxidized [plastocyanin] + reduced [2Fe-2S]-[ferredoxin]. In terms of biological role, psaA and PsaB bind P700, the primary electron donor of photosystem I (PSI), as well as the electron acceptors A0, A1 and FX. PSI is a plastocyanin/cytochrome c6-ferredoxin oxidoreductase, converting photonic excitation into a charge separation, which transfers an electron from the donor P700 chlorophyll pair to the spectroscopically characterized acceptors A0, A1, FX, FA and FB in turn. Oxidized P700 is reduced on the lumenal side of the thylakoid membrane by plastocyanin or cytochrome c6. In Synechococcus sp. (strain JA-2-3B'a(2-13)) (Cyanobacteria bacterium Yellowstone B-Prime), this protein is Photosystem I P700 chlorophyll a apoprotein A1.